Consider the following 743-residue polypeptide: Adhesion defective protein 2 (743 aa).

The interval 1–36 (MADPGLRSGVGLPSQQGQKHDLQKDQKQPHVNNADR) is disordered. Residues 18 to 28 (QKHDLQKDQKQ) show a composition bias toward basic and acidic residues. Positions 38–70 (TQSLLNSYIYDYLIKKDYCEAARAFGREAQVQT) constitute a LisH domain. Disordered stretches follow at residues 79–127 (NSLA…PPPP), 264–361 (LQSV…QYPV), 379–426 (RNPH…YGFS), and 476–692 (KERK…KSSD). A Phosphoserine modification is found at Ser-89. The span at 98–114 (ISNNESSDENMNVNNGN) shows a compositional bias: polar residues. Over residues 264–281 (LQSVQQQQKQHQQKKTPQ) the composition is skewed to low complexity. Polar residues-rich tracts occupy residues 282 to 297 (SGST…QPTT), 315 to 353 (IPSS…DTTG), 390 to 399 (PSSTLPQQQK), 408 to 426 (QQPS…YGFS), and 482 to 500 (TSAS…SSVA). The segment covering 501 to 520 (KTKSTTPKSTDTPTEATTSP) has biased composition (low complexity). Polar residues-rich tracts occupy residues 521 to 544 (VKVS…NMPM) and 556 to 566 (DHPSNYSNLIE). A compositionally biased stretch (low complexity) spans 567-578 (NSSTSDTNNADN). Residues 586-602 (WQLQQTHSSRPTPNASS) show a composition bias toward polar residues. Residues 612–631 (PSSANSNAPTPAPTVNTTNP) are compositionally biased toward low complexity. Positions 661 to 670 (DNQNQSGKSN) are enriched in polar residues. Over residues 671 to 688 (PDTSATPSAPTESTTVAT) the composition is skewed to low complexity.

Belongs to the FLO8 family.

The protein resides in the cytoplasm. The protein localises to the nucleus. In terms of biological role, probable transcriptional regulator involved in cell adhesion. The chain is Adhesion defective protein 2 (adn2) from Schizosaccharomyces pombe (strain 972 / ATCC 24843) (Fission yeast).